The chain runs to 227 residues: C4-dicarboxylate TRAP transporter small permease protein DctQ (227 aa).

Residues 1–7 (MLRILDR) are Cytoplasmic-facing. Residues 8–28 (AEEVLIAALIATATVLIFVSV) traverse the membrane as a helical segment. Over 29–67 (THRFTLGFVADFVGFFRGHGMTGAAAAAKSLYTTLRGIN) the chain is Periplasmic. Residues 68–88 (LVWAQELCIILFVWMAKFGAA) traverse the membrane as a helical segment. At 89–112 (YGVRTGIHVGIDVLINRLDAPKRR) the chain is on the cytoplasmic side. The helical transmembrane segment at 113–133 (FFILLGLGAGALFTGIIATLG) threads the bilayer. The Periplasmic segment spans residues 134–149 (ANFVLHMYHASSTSPD). A helical membrane pass occupies residues 150-170 (LELPMWLVYLAIPMGSSLMCF). At 171–227 (RFLQVAFGFARTGELPHHDHGHVDGVDTENEGIDAEGDVLLHSPLTPRDLVEKPKDN) the chain is on the cytoplasmic side.

This sequence belongs to the TRAP transporter small permease family. In terms of assembly, the complex comprises the extracytoplasmic solute receptor protein DctP, and the two transmembrane proteins DctQ and DctM.

It localises to the cell inner membrane. Functionally, part of the tripartite ATP-independent periplasmic (TRAP) transport system DctPQM involved in C4-dicarboxylates uptake. The sequence is that of C4-dicarboxylate TRAP transporter small permease protein DctQ from Rhodobacter capsulatus (Rhodopseudomonas capsulata).